A 79-amino-acid chain; its full sequence is Small ribosomal subunit protein bS18 (79 aa).

Belongs to the bacterial ribosomal protein bS18 family. In terms of assembly, part of the 30S ribosomal subunit. Forms a tight heterodimer with protein bS6.

Functionally, binds as a heterodimer with protein bS6 to the central domain of the 16S rRNA, where it helps stabilize the platform of the 30S subunit. The sequence is that of Small ribosomal subunit protein bS18 from Rhodopseudomonas palustris (strain BisB5).